Consider the following 132-residue polypeptide: ATP synthase epsilon chain, chloroplastic (132 aa).

At Thr-2 the chain carries N-acetylthreonine.

Belongs to the ATPase epsilon chain family. As to quaternary structure, F-type ATPases have 2 components, CF(1) - the catalytic core - and CF(0) - the membrane proton channel. CF(1) has five subunits: alpha(3), beta(3), gamma(1), delta(1), epsilon(1). CF(0) has three main subunits: a, b and c.

Its subcellular location is the plastid. It is found in the chloroplast thylakoid membrane. Functionally, produces ATP from ADP in the presence of a proton gradient across the membrane. The sequence is that of ATP synthase epsilon chain, chloroplastic from Arabidopsis thaliana (Mouse-ear cress).